The sequence spans 779 residues: Acyl-CoA dehydrogenase family member 11 (779 aa).

N6-acetyllysine occurs at positions 163, 166, and 175. Ser-210 carries the phosphoserine modification. Position 323 is a phosphotyrosine (Tyr-323). Residues Lys-368 and Lys-390 each carry the N6-succinyllysine modification. FAD-binding positions include 503-513, 511-513, 537-539, and Ser-539; these read FCMTEPNVSSS, SSS, and WSS. Ser-513 contacts substrate. 628–631 contributes to the substrate binding site; it reads GPGR. FAD contacts are provided by residues Arg-656, Gln-726, and 726–730; that span reads QVHGG. Gly-754 contacts substrate. Residues 755-757 and Glu-757 each bind FAD; that span reads PDE. Position 765 is an N6-acetyllysine (Lys-765).

It belongs to the acyl-CoA dehydrogenase family. In terms of assembly, homodimer. It depends on FAD as a cofactor.

The protein localises to the peroxisome. It is found in the mitochondrion membrane. It catalyses the reaction a 2,3-saturated acyl-CoA + oxidized [electron-transfer flavoprotein] + H(+) = a (2E)-enoyl-CoA + reduced [electron-transfer flavoprotein]. It carries out the reaction docosanoyl-CoA + oxidized [electron-transfer flavoprotein] + H(+) = (2E)-docosenoyl-CoA + reduced [electron-transfer flavoprotein]. The catalysed reaction is tetracosanoyl-CoA + oxidized [electron-transfer flavoprotein] + H(+) = (2E)-tetracosenoyl-CoA + reduced [electron-transfer flavoprotein]. The enzyme catalyses eicosanoyl-CoA + oxidized [electron-transfer flavoprotein] + H(+) = (2E)-eicosenoyl-CoA + reduced [electron-transfer flavoprotein]. It catalyses the reaction hexacosanoyl-CoA + oxidized [electron-transfer flavoprotein] + H(+) = (2E)-hexacosenoyl-CoA + reduced [electron-transfer flavoprotein]. It carries out the reaction tricosanoyl-CoA + oxidized [electron-transfer flavoprotein] + H(+) = (2E)-tricosenoyl-CoA + reduced [electron-transfer flavoprotein]. Its pathway is lipid metabolism; fatty acid beta-oxidation. Acyl-CoA dehydrogenase, that exhibits maximal activity towards saturated C22-CoA. Probably participates in beta-oxydation and energy production but could also play a role in the metabolism of specific fatty acids to control fatty acids composition of cellular lipids in brain. In Mus musculus (Mouse), this protein is Acyl-CoA dehydrogenase family member 11 (Acad11).